A 511-amino-acid polypeptide reads, in one-letter code: Tyrosine--tRNA ligase, chloroplastic/mitochondrial (511 aa).

Tyr118 is a binding site for L-tyrosine. Residue Asp122 participates in ATP binding. Residues 123–132 (PTAESLHLGN) carry the 'HIGH' region motif. L-tyrosine contacts are provided by Asp162, Tyr256, Gln260, Asp263, and Gln282. Positions 318–322 (KFGKS) match the 'KMSKS' region motif. ATP is bound at residue Lys321. One can recognise an S4 RNA-binding domain in the interval 444 to 510 (LSIVDLSVSA…GKKNKVVVRI (67 aa)).

Belongs to the class-I aminoacyl-tRNA synthetase family.

It is found in the plastid. The protein resides in the chloroplast. It localises to the mitochondrion. The enzyme catalyses tRNA(Tyr) + L-tyrosine + ATP = L-tyrosyl-tRNA(Tyr) + AMP + diphosphate + H(+). Catalyzes the attachment of tyrosine to tRNA(Tyr) in a two-step reaction: tyrosine is first activated by ATP to form Tyr-AMP and then transferred to the acceptor end of tRNA(Tyr). In Arabidopsis thaliana (Mouse-ear cress), this protein is Tyrosine--tRNA ligase, chloroplastic/mitochondrial.